Consider the following 215-residue polypeptide: MKLFGKPKPKQDTQETIGKLRLTLDMLEKRQTFLQDKLEKEQEKAKVLVSQKRKREALLCLKKRNNFQNEVTKLQGSYDTLNQQIFALENAKMNMEIMNSMRDGARSLRELHGHLTIDKVDDVIEEIQEQMEIHEEISNAISQPLGNQVEDEEELLRELAEYEQEELDAQLLNIKAPSRELPQEIQVNFPTISKTVPKLSKEEEEIRALEESLAM.

Residues 10–173 are a coiled coil; that stretch reads KQDTQETIGK…QEELDAQLLN (164 aa).

The protein belongs to the SNF7 family. In terms of assembly, probable core component of the endosomal sorting required for transport complex III (ESCRT-III). ESCRT-III components are thought to multimerize to form a flat lattice on the perimeter membrane of the endosome.

Its subcellular location is the cytoplasmic vesicle membrane. It localises to the late endosome membrane. Its function is as follows. Probable core component of the endosomal sorting required for transport complex III (ESCRT-III) which is involved in multivesicular bodies (MVBs) formation and sorting of endosomal cargo proteins into MVBs. MVBs contain intraluminal vesicles (ILVs) that are generated by invagination and scission from the limiting membrane of the endosome and mostly are delivered to lysosomes enabling degradation of membrane proteins. The chain is Charged multivesicular body protein 4 (chmp4) from Dictyostelium discoideum (Social amoeba).